Here is a 246-residue protein sequence, read N- to C-terminus: Probable transcriptional regulatory protein Dole_0371 (246 aa).

Belongs to the TACO1 family.

Its subcellular location is the cytoplasm. The protein is Probable transcriptional regulatory protein Dole_0371 of Desulfosudis oleivorans (strain DSM 6200 / JCM 39069 / Hxd3) (Desulfococcus oleovorans).